A 624-amino-acid chain; its full sequence is Aliphatic sulfonate oxidoreductase, WOR-like subunit (624 aa).

The tungstopterin site is built by Lys-77, Ser-93, Val-94, Ser-96, His-195, Ala-196, Gly-198, and Tyr-199. Residues Asp-299, Cys-302, and Cys-306 each contribute to the [4Fe-4S] cluster site. Tungstopterin contacts are provided by Asp-353, Leu-357, Asp-358, Gly-359, Thr-470, Asp-490, Ile-494, Cys-495, and Asn-496. [4Fe-4S] cluster is bound at residue Cys-495. A disordered region spans residues 552–575 (KDDDNPPRFYEPLPSGPVKGKAPN).

Belongs to the AOR/FOR family. In terms of assembly, heterodimer composed of a small WOR5-S subunit, with four [4Fe-4S] clusters, and a large WOR5-L subunit, containing the active site tungsto-bispyranopterin cofactor as well as another [4Fe-4S] cluster. It depends on [4Fe-4S] cluster as a cofactor. Tungstopterin is required as a cofactor.

The protein localises to the cytoplasm. It catalyses the reaction an aliphatic sulfonate + 4 oxidized [4Fe-4S]-[ferredoxin] + 2 H2O = 4 reduced [4Fe-4S]-[ferredoxin] + a carboxylate + sulfite + 6 H(+). The enzyme catalyses an aliphatic sulfonate + 2 oxidized [4Fe-4S]-[ferredoxin] + H2O = 2 reduced [4Fe-4S]-[ferredoxin] + an aldehyde + sulfite + 3 H(+). It carries out the reaction 2 oxidized [4Fe-4S]-[ferredoxin] + an aldehyde + H2O = 2 reduced [4Fe-4S]-[ferredoxin] + a carboxylate + 3 H(+). The catalysed reaction is 4 oxidized [4Fe-4S]-[ferredoxin] + taurine + 2 H2O = 4 reduced [4Fe-4S]-[ferredoxin] + sulfite + glycine + 6 H(+). It catalyses the reaction 2 oxidized [4Fe-4S]-[ferredoxin] + taurine + H2O = aminoacetaldehyde + 2 reduced [4Fe-4S]-[ferredoxin] + sulfite + 3 H(+). The enzyme catalyses aminoacetaldehyde + 2 oxidized [4Fe-4S]-[ferredoxin] + H2O = 2 reduced [4Fe-4S]-[ferredoxin] + glycine + 3 H(+). Its function is as follows. WOR-like catalytic subunit of an oxidoreductase that can desulfonate and oxidize aliphatic sulfonates such as taurine. The activity involves two steps: an oxidative desulfonation reaction, followed by the activation of a second water molecule and oxidation of the resulting aldehyde. May be involved in the oxidation of various aliphatic sulfonates and also phosphonates. In vitro, has a broad substrate specificity with a high affinity for several substituted and nonsubstituted aliphatic and aromatic aldehydes with various chain lengths, with methyl viologen or benzyl viologen as electron acceptor. Ferredoxin is the physiological electron acceptor. The polypeptide is Aliphatic sulfonate oxidoreductase, WOR-like subunit (Pyrococcus furiosus (strain ATCC 43587 / DSM 3638 / JCM 8422 / Vc1)).